Here is a 627-residue protein sequence, read N- to C-terminus: Chaperone protein DnaK (627 aa).

Threonine 197 carries the phosphothreonine; by autocatalysis modification. The span at 598–611 (AYAKEQGGQQGAAD) shows a compositional bias: low complexity. The disordered stretch occupies residues 598–627 (AYAKEQGGQQGAADAGKKADDDDVIDAEVE). A compositionally biased stretch (acidic residues) spans 618 to 627 (DDDVIDAEVE).

The protein belongs to the heat shock protein 70 family.

Acts as a chaperone. This Sulfurovum sp. (strain NBC37-1) protein is Chaperone protein DnaK.